A 149-amino-acid polypeptide reads, in one-letter code: Probable ubiquitin-conjugating enzyme E2 12 (149 aa).

The span at 1-15 (MASKRISRELRDMQR) shows a compositional bias: basic and acidic residues. Residues 1–22 (MASKRISRELRDMQRHPPANCS) are disordered. The UBC core domain occupies 1–148 (MASKRISREL…AQKWTQKYAM (148 aa)). The active-site Glycyl thioester intermediate is the cysteine 86.

The protein belongs to the ubiquitin-conjugating enzyme family. As to expression, ubiquitously expressed at very low levels.

The catalysed reaction is S-ubiquitinyl-[E1 ubiquitin-activating enzyme]-L-cysteine + [E2 ubiquitin-conjugating enzyme]-L-cysteine = [E1 ubiquitin-activating enzyme]-L-cysteine + S-ubiquitinyl-[E2 ubiquitin-conjugating enzyme]-L-cysteine.. It functions in the pathway protein modification; protein ubiquitination. Accepts the ubiquitin from the E1 complex and catalyzes its covalent attachment to other proteins. This is Probable ubiquitin-conjugating enzyme E2 12 (UBC12) from Arabidopsis thaliana (Mouse-ear cress).